The sequence spans 185 residues: Elongation factor P (185 aa).

It belongs to the elongation factor P family.

Its subcellular location is the cytoplasm. The protein operates within protein biosynthesis; polypeptide chain elongation. In terms of biological role, involved in peptide bond synthesis. Stimulates efficient translation and peptide-bond synthesis on native or reconstituted 70S ribosomes in vitro. Probably functions indirectly by altering the affinity of the ribosome for aminoacyl-tRNA, thus increasing their reactivity as acceptors for peptidyl transferase. The sequence is that of Elongation factor P from Bordetella bronchiseptica (strain ATCC BAA-588 / NCTC 13252 / RB50) (Alcaligenes bronchisepticus).